A 146-amino-acid chain; its full sequence is Large ribosomal subunit protein uL15 (146 aa).

The segment covering 1 to 18 (MKLHELKPSEGSRKERNR) has biased composition (basic and acidic residues). The segment at 1 to 50 (MKLHELKPSEGSRKERNRVGRGTGSGNGKTSGRGHKGQKARSGGGVRLGF) is disordered. Gly residues predominate over residues 21-31 (RGTGSGNGKTS).

Belongs to the universal ribosomal protein uL15 family. In terms of assembly, part of the 50S ribosomal subunit.

In terms of biological role, binds to the 23S rRNA. The polypeptide is Large ribosomal subunit protein uL15 (Listeria innocua serovar 6a (strain ATCC BAA-680 / CLIP 11262)).